The chain runs to 274 residues: uncharacterized protein (274 aa).

ATP is bound at residue 104 to 111 (GVFAIGKS).

This is an uncharacterized protein from Mycoplasma genitalium (strain ATCC 33530 / DSM 19775 / NCTC 10195 / G37) (Mycoplasmoides genitalium).